A 582-amino-acid polypeptide reads, in one-letter code: tRNA-guanine(15) transglycosylase (582 aa).

Catalysis depends on aspartate 95, which acts as the Nucleophile. Positions 130 and 196 each coordinate substrate. Positions 279, 281, and 284 each coordinate Zn(2+). Residues 507-582 (RMRVVVNKEA…RAVKVRKGVE (76 aa)) enclose the PUA domain.

This sequence belongs to the archaeosine tRNA-ribosyltransferase family. As to quaternary structure, homodimer. Requires Zn(2+) as cofactor.

It carries out the reaction guanosine(15) in tRNA + 7-cyano-7-deazaguanine = 7-cyano-7-carbaguanosine(15) in tRNA + guanine. It participates in tRNA modification; archaeosine-tRNA biosynthesis. Exchanges the guanine residue with 7-cyano-7-deazaguanine (preQ0) at position 15 in the dihydrouridine loop (D-loop) of archaeal tRNAs. The sequence is that of tRNA-guanine(15) transglycosylase (tgtA) from Pyrococcus horikoshii (strain ATCC 700860 / DSM 12428 / JCM 9974 / NBRC 100139 / OT-3).